Consider the following 63-residue polypeptide: Non-structural protein 3b (63 aa).

This chain is Non-structural protein 3b, found in Avian infectious bronchitis virus (strain UK/68/84) (IBV).